A 110-amino-acid chain; its full sequence is Nucleoid-associated protein KPN78578_04440 (110 aa).

It belongs to the YbaB/EbfC family. Homodimer.

It localises to the cytoplasm. It is found in the nucleoid. Functionally, binds to DNA and alters its conformation. May be involved in regulation of gene expression, nucleoid organization and DNA protection. The polypeptide is Nucleoid-associated protein KPN78578_04440 (Klebsiella pneumoniae subsp. pneumoniae (strain ATCC 700721 / MGH 78578)).